The following is a 389-amino-acid chain: Succinate--CoA ligase [ADP-forming] subunit beta (389 aa).

The ATP-grasp domain maps to 9 to 244 (KELLRQFNVP…IDEEDAAEIE (236 aa)). ATP is bound by residues K46, 53-55 (GRG), E99, A102, and E107. Residues N199 and D213 each coordinate Mg(2+). Residues N264 and 321-323 (GIM) each bind substrate.

Belongs to the succinate/malate CoA ligase beta subunit family. Heterotetramer of two alpha and two beta subunits. It depends on Mg(2+) as a cofactor.

It catalyses the reaction succinate + ATP + CoA = succinyl-CoA + ADP + phosphate. It carries out the reaction GTP + succinate + CoA = succinyl-CoA + GDP + phosphate. The protein operates within carbohydrate metabolism; tricarboxylic acid cycle; succinate from succinyl-CoA (ligase route): step 1/1. In terms of biological role, succinyl-CoA synthetase functions in the citric acid cycle (TCA), coupling the hydrolysis of succinyl-CoA to the synthesis of either ATP or GTP and thus represents the only step of substrate-level phosphorylation in the TCA. The beta subunit provides nucleotide specificity of the enzyme and binds the substrate succinate, while the binding sites for coenzyme A and phosphate are found in the alpha subunit. In Polynucleobacter asymbioticus (strain DSM 18221 / CIP 109841 / QLW-P1DMWA-1) (Polynucleobacter necessarius subsp. asymbioticus), this protein is Succinate--CoA ligase [ADP-forming] subunit beta.